The following is a 75-amino-acid chain: Protease B inhibitor 1 (75 aa).

Position 74 is a phosphothreonine (T74).

Belongs to the protease inhibitor I9 family. As to quaternary structure, part of the heterodimeric LMA1 complex together with the thioredoxin II/TRX2. LMA1 binds to the ATPase SEC18.

It is found in the cytoplasm. Its subcellular location is the nucleus. Cytosolic inhibitor of vacuolar proteinase B (yscB), probably regulating protease B activity during limited proteolysis. PBI2 is a component of the LMA1 complex, which is involved in the facilitation of vesicle fusion such as homotypic vacuole and ER-derived COPII vesicle fusion with the Golgi. This Saccharomyces cerevisiae (Baker's yeast) protein is Protease B inhibitor 1 (PBI2).